Reading from the N-terminus, the 276-residue chain is Pantothenate synthetase (276 aa).

Position 27–34 (27–34 (MGALHKGH)) interacts with ATP. The active-site Proton donor is histidine 34. Glutamine 58 is a binding site for (R)-pantoate. Glutamine 58 serves as a coordination point for beta-alanine. Position 147–150 (147–150 (GKKD)) interacts with ATP. A (R)-pantoate-binding site is contributed by glutamine 153. ATP-binding positions include valine 176 and 184-187 (LSSR).

Belongs to the pantothenate synthetase family. In terms of assembly, homodimer.

The protein localises to the cytoplasm. The enzyme catalyses (R)-pantoate + beta-alanine + ATP = (R)-pantothenate + AMP + diphosphate + H(+). It functions in the pathway cofactor biosynthesis; (R)-pantothenate biosynthesis; (R)-pantothenate from (R)-pantoate and beta-alanine: step 1/1. Its function is as follows. Catalyzes the condensation of pantoate with beta-alanine in an ATP-dependent reaction via a pantoyl-adenylate intermediate. The protein is Pantothenate synthetase of Helicobacter pylori (strain ATCC 700392 / 26695) (Campylobacter pylori).